Here is a 64-residue protein sequence, read N- to C-terminus: Endodeoxyribonuclease toxin RalR (64 aa).

Ca(2+) is required as a cofactor. Requires Mg(2+) as cofactor.

Inhibited by EDTA. In terms of biological role, toxic component of a type I toxin-antitoxin (TA) system. Upon overexpression inhibits growth and reduces colony-forming units in both the presence and absence of the Rac prophage, cells become filamentous. Has deoxyribonuclease activity (probably endonucleolytic), does not digest RNA. Its toxic effects are neutralized by sRNA antitoxin RalA, which is encoded in trans on the opposite DNA strand. Has RAL-like activity. This chain is Endodeoxyribonuclease toxin RalR (ralR), found in Escherichia coli (strain K12).